The following is a 95-amino-acid chain: Acylphosphatase (95 aa).

The region spanning 5 to 93 is the Acylphosphatase-like domain; that stretch reads RAHLFIRGKV…GEFQDFRILP (89 aa). Catalysis depends on residues Arg-20 and Asn-38.

This sequence belongs to the acylphosphatase family.

It carries out the reaction an acyl phosphate + H2O = a carboxylate + phosphate + H(+). This chain is Acylphosphatase (acyP), found in Pyrobaculum arsenaticum (strain DSM 13514 / JCM 11321 / PZ6).